The sequence spans 352 residues: Glucose-6-phosphatase catalytic subunit 1 (352 aa).

The Lumenal segment spans residues 1-27 (MDLLHSWGVELAVYLQTRYGKYEGLFD). Residues 28 to 48 (LASTVADLHTTFFWLFPIWFH) form a helical membrane-spanning segment. At 49–56 (LRRDTALR) the chain is on the cytoplasmic side. The helical transmembrane segment at 57–77 (LIWVAVIGDWLNLVLKWVLFG) threads the bilayer. Topologically, residues 78-113 (ERPYWWVHETKFYGAGPAPSLQQFPITCETGPGSPS) are lumenal. Arg79 lines the substrate pocket. Residues 114 to 134 (GHAMGAAGVWYVMVTALLSIA) form a helical membrane-spanning segment. His115 (proton donor) is an active-site residue. The Cytoplasmic portion of the chain corresponds to 135-141 (REKQCPP). The chain crosses the membrane as a helical span at residues 142–162 (LLYRFLYIGLWMLMGLVELVV). Residues 163–166 (CISR) lie on the Lumenal side of the membrane. Residue Arg166 coordinates substrate. Residues 167 to 187 (VYMAAHFPHQVIAGIITGTLV) traverse the membrane as a helical segment. Catalysis depends on His172, which acts as the Nucleophile. Over 188–205 (AEVVSKEKWIYSASLKKY) the chain is Cytoplasmic. The helical transmembrane segment at 206-226 (FLITLFLTSFAVGFYVLLKAL) threads the bilayer. Residues 227 to 256 (DVDLLWTMEKAQKWCIRPEWVHLDSAPFAS) are Lumenal-facing. Residues 257 to 276 (LLRNMGSLFGLGLGLHSPFY) form a helical membrane-spanning segment. Residues 277-289 (KTTKMRIMSAPLR) are Cytoplasmic-facing. Residues 290-310 (IGCIVISVSLLHLLDGWTFSP) traverse the membrane as a helical segment. Topologically, residues 311-324 (ENHMTFYALSFGKS) are lumenal. A helical transmembrane segment spans residues 325-345 (AVALLIPTTLVPWALSKIYPV). Over 346-352 (KTEGKNL) the chain is Cytoplasmic. Positions 349–352 (GKNL) match the Prevents secretion from ER motif.

Belongs to the glucose-6-phosphatase family.

The protein resides in the endoplasmic reticulum membrane. It carries out the reaction D-glucose 6-phosphate + H2O = D-glucose + phosphate. Its pathway is carbohydrate biosynthesis; gluconeogenesis. In terms of biological role, hydrolyzes glucose-6-phosphate to glucose in the endoplasmic reticulum. Forms with the glucose-6-phosphate transporter (SLC37A4/G6PT) the complex responsible for glucose production in the terminal step of glycogenolysis and gluconeogenesis. Hence, it is the key enzyme in homeostatic regulation of blood glucose levels. This Haplochromis nubilus (Blue Victoria mouthbrooder) protein is Glucose-6-phosphatase catalytic subunit 1 (g6pc1).